The sequence spans 644 residues: Threonine--tRNA ligase (644 aa).

Residues 1–61 enclose the TGS domain; that stretch reads MVAITLPDGN…TQDASVEIVT (61 aa). Positions 242 to 533 are catalytic; it reads DHRKIGKALN…LIEHYAGWMP (292 aa). Residues Cys333, His384, and His510 each coordinate Zn(2+).

It belongs to the class-II aminoacyl-tRNA synthetase family. Homodimer. It depends on Zn(2+) as a cofactor.

It localises to the cytoplasm. It catalyses the reaction tRNA(Thr) + L-threonine + ATP = L-threonyl-tRNA(Thr) + AMP + diphosphate + H(+). Catalyzes the attachment of threonine to tRNA(Thr) in a two-step reaction: L-threonine is first activated by ATP to form Thr-AMP and then transferred to the acceptor end of tRNA(Thr). Also edits incorrectly charged L-seryl-tRNA(Thr). The chain is Threonine--tRNA ligase from Psychrobacter sp. (strain PRwf-1).